Reading from the N-terminus, the 280-residue chain is Bifunctional protein FolD (280 aa).

NADP(+) is bound by residues 158–160 (GES), Ile183, and Ile222.

It belongs to the tetrahydrofolate dehydrogenase/cyclohydrolase family. Homodimer.

It carries out the reaction (6R)-5,10-methylene-5,6,7,8-tetrahydrofolate + NADP(+) = (6R)-5,10-methenyltetrahydrofolate + NADPH. The enzyme catalyses (6R)-5,10-methenyltetrahydrofolate + H2O = (6R)-10-formyltetrahydrofolate + H(+). It participates in one-carbon metabolism; tetrahydrofolate interconversion. In terms of biological role, catalyzes the oxidation of 5,10-methylenetetrahydrofolate to 5,10-methenyltetrahydrofolate and then the hydrolysis of 5,10-methenyltetrahydrofolate to 10-formyltetrahydrofolate. The protein is Bifunctional protein FolD of Mycoplasma mobile (strain ATCC 43663 / 163K / NCTC 11711) (Mesomycoplasma mobile).